Here is a 297-residue protein sequence, read N- to C-terminus: Pyrroline-5-carboxylate reductase 1 (297 aa).

Belongs to the pyrroline-5-carboxylate reductase family.

It is found in the cytoplasm. It carries out the reaction L-proline + NADP(+) = (S)-1-pyrroline-5-carboxylate + NADPH + 2 H(+). The enzyme catalyses L-proline + NAD(+) = (S)-1-pyrroline-5-carboxylate + NADH + 2 H(+). Its pathway is amino-acid biosynthesis; L-proline biosynthesis; L-proline from L-glutamate 5-semialdehyde: step 1/1. Functionally, catalyzes the reduction of 1-pyrroline-5-carboxylate (PCA) to L-proline. In Bacillus subtilis (strain 168), this protein is Pyrroline-5-carboxylate reductase 1 (proH).